Here is a 301-residue protein sequence, read N- to C-terminus: Sulfate adenylyltransferase subunit 2 2 (301 aa).

This sequence belongs to the PAPS reductase family. CysD subfamily. In terms of assembly, heterodimer composed of CysD, the smaller subunit, and CysN.

It carries out the reaction sulfate + ATP + H(+) = adenosine 5'-phosphosulfate + diphosphate. It participates in sulfur metabolism; hydrogen sulfide biosynthesis; sulfite from sulfate: step 1/3. Its function is as follows. With CysN forms the ATP sulfurylase (ATPS) that catalyzes the adenylation of sulfate producing adenosine 5'-phosphosulfate (APS) and diphosphate, the first enzymatic step in sulfur assimilation pathway. APS synthesis involves the formation of a high-energy phosphoric-sulfuric acid anhydride bond driven by GTP hydrolysis by CysN coupled to ATP hydrolysis by CysD. In Shewanella sediminis (strain HAW-EB3), this protein is Sulfate adenylyltransferase subunit 2 2.